A 375-amino-acid polypeptide reads, in one-letter code: Glutamate 5-kinase (375 aa).

Position 17 (Lys-17) interacts with ATP. The substrate site is built by Ser-57, Asp-144, and Asn-156. 176-177 is an ATP binding site; sequence TD. In terms of domain architecture, PUA spans 283–361; the sequence is KGELILDTGA…DEIEGILGYV (79 aa).

Belongs to the glutamate 5-kinase family.

The protein localises to the cytoplasm. The catalysed reaction is L-glutamate + ATP = L-glutamyl 5-phosphate + ADP. It participates in amino-acid biosynthesis; L-proline biosynthesis; L-glutamate 5-semialdehyde from L-glutamate: step 1/2. Catalyzes the transfer of a phosphate group to glutamate to form L-glutamate 5-phosphate. The sequence is that of Glutamate 5-kinase from Thioalkalivibrio sulfidiphilus (strain HL-EbGR7).